The primary structure comprises 146 residues: Probable transporter XF_0765 (146 aa).

4 consecutive transmembrane segments (helical) span residues 9–29, 46–66, 91–111, and 116–136; these read FTVA…SEMI, NPSL…GMAL, IVFG…CPGP, and LSTG…GMII.

Belongs to the TsuA/YedE (TC 9.B.102) family.

It is found in the cell inner membrane. This Xylella fastidiosa (strain 9a5c) protein is Probable transporter XF_0765.